A 333-amino-acid polypeptide reads, in one-letter code: Transcription initiation factor IIB (333 aa).

The TFIIB-type zinc-finger motif lies at Glu-33–Gln-64. Positions 37, 40, 56, and 59 each coordinate Zn(2+). Tandem repeats lie at residues Gln-149–Leu-232 and Leu-243–Lys-324.

This sequence belongs to the TFIIB family.

In terms of biological role, stabilizes TBP binding to an archaeal box-A promoter. Also responsible for recruiting RNA polymerase II to the pre-initiation complex (DNA-TBP-TFIIB). This is Transcription initiation factor IIB from Pyrobaculum arsenaticum (strain DSM 13514 / JCM 11321 / PZ6).